Here is an 80-residue protein sequence, read N- to C-terminus: Lantibiotic Flvalpha.c (80 aa).

A propeptide spans 1-38 (MNKNPIYRSEEEAKNIACGNVAAELDENSQALDAINGA) (cleaved by FlvT). Threonine 43 and threonine 47 each carry 2,3-didehydrobutyrine; by FlvM1. Positions 52–55 (TLGC) form a cross-link, beta-methyllanthionine (Thr-Cys); by FlvM1. A cross-link (lanthionine (Ser-Cys); by FlvM1) is located at residues 58-68 (SYGLGNGGYCC). 2 consecutive cross-links (beta-methyllanthionine (Thr-Cys); by FlvM1) follow at residues 69–74 (TYTVEC) and 71–78 (TVECSKTC).

In terms of processing, the lanthionine formed by Ser-58 and Cys-68 forms a putative lipid II binding motif. Post-translationally, maturation of FlvA1 peptides involves the enzymatic conversion of Thr, and Ser into dehydrated AA and the formation of thioether bonds with cysteines. Modifications are processed by the flavecin synthetase FlvM1. This is followed by membrane translocation and cleavage of the modified precursor. Contains DL-lanthionine and DL-beta-methyllanthionine, when coepressed in E.coli with the flavecin synthetase FlvM1.

Its subcellular location is the secreted. Functionally, lanthionine-containing peptide antibiotic (lantibiotic) only active on Gram-positive bacteria in synergy with Flvbeta peptides, which are encoded by the same operon than Flvalpha.a. Shows antibacterial activity in synergy with Flvbeta.b, Flvbeta.c, Flvbeta.e and Flvbeta.g. Does not show antibacterial activity when tested with Flvbeta.a, Flvbeta.d, Flvbeta.f and Flvbeta.h. The bactericidal activity of lantibiotics is based on depolarization of energized bacterial cytoplasmic membranes, initiated by the formation of aqueous transmembrane pores. This is Lantibiotic Flvalpha.c from Ruminococcus flavefaciens.